Reading from the N-terminus, the 318-residue chain is Very-long-chain 3-oxoacyl-CoA reductase-B (318 aa).

The helical transmembrane segment at 15–35 (FWYLGVVAATWWGLRAAWCLL) threads the bilayer. 54 to 83 (GKWAVVTGATDGIGKAYAEELARRGMNIVL) contacts NADP(+). A run of 2 helical transmembrane segments spans residues 187–207 (GVVL…LTVY) and 281–301 (AITG…SMGM). Substrate is bound at residue Ser194. The active-site Proton acceptor is the Tyr207.

This sequence belongs to the short-chain dehydrogenases/reductases (SDR) family. 17-beta-HSD 3 subfamily.

Its subcellular location is the endoplasmic reticulum membrane. It carries out the reaction a very-long-chain (3R)-3-hydroxyacyl-CoA + NADP(+) = a very-long-chain 3-oxoacyl-CoA + NADPH + H(+). The enzyme catalyses 17beta-estradiol + NAD(+) = estrone + NADH + H(+). The catalysed reaction is 17beta-estradiol + NADP(+) = estrone + NADPH + H(+). The protein operates within lipid metabolism; fatty acid biosynthesis. Its pathway is steroid biosynthesis; estrogen biosynthesis. In terms of biological role, catalyzes the second of the four reactions of the long-chain fatty acids elongation cycle. This endoplasmic reticulum-bound enzymatic process, allows the addition of two carbons to the chain of long- and very long-chain fatty acids/VLCFAs per cycle. This enzyme has a 3-ketoacyl-CoA reductase activity, reducing 3-ketoacyl-CoA to 3-hydroxyacyl-CoA, within each cycle of fatty acid elongation. Thereby, it may participate in the production of VLCFAs of different chain lengths that are involved in multiple biological processes as precursors of membrane lipids and lipid mediators. May also catalyze the transformation of estrone (E1) into estradiol (E2) and play a role in estrogen formation. This is Very-long-chain 3-oxoacyl-CoA reductase-B (hsd17b12-b) from Xenopus laevis (African clawed frog).